The following is a 437-amino-acid chain: 26S proteasome regulatory subunit 4 homolog (437 aa).

Residues 1 to 47 (MGQGVSSGQDKKKKKGSNQKPKYEPPVQSKFGRKKRKGGPATAEKLP) form a disordered region. Glycine 2 carries N-myristoyl glycine lipidation. 223–230 (GAPGTGKT) serves as a coordination point for ATP. Residues lysine 234, lysine 255, and lysine 290 each participate in a glycyl lysine isopeptide (Lys-Gly) (interchain with G-Cter in ubiquitin) cross-link.

It belongs to the AAA ATPase family.

It is found in the cytoplasm. The protein localises to the nucleus. Functionally, the 26S proteasome is involved in the ATP-dependent degradation of ubiquitinated proteins. The regulatory (or ATPase) complex confers ATP dependency and substrate specificity to the 26S complex. Has ATPase activity. The protein is 26S proteasome regulatory subunit 4 homolog (RPT2) of Saccharomyces cerevisiae (strain ATCC 204508 / S288c) (Baker's yeast).